We begin with the raw amino-acid sequence, 711 residues long: Long-chain-fatty-acid--CoA ligase 4 (711 aa).

Residues 8 to 28 (LTIILLPVHLLITIYSALIFI) traverse the membrane as a helical; Signal-anchor for type III membrane protein segment. Residues 29 to 711 (PWYFLTNAKK…KDIERMYGGK (683 aa)) are Cytoplasmic-facing. Serine 447 carries the phosphoserine modification.

The protein belongs to the ATP-dependent AMP-binding enzyme family. Mg(2+) serves as cofactor. In terms of tissue distribution, abundant in steroidogenic tissues, also found in the kidney, brain and liver.

Its subcellular location is the mitochondrion outer membrane. The protein resides in the peroxisome membrane. The protein localises to the microsome membrane. It is found in the endoplasmic reticulum membrane. It localises to the cell membrane. The enzyme catalyses a long-chain fatty acid + ATP + CoA = a long-chain fatty acyl-CoA + AMP + diphosphate. It catalyses the reaction (5Z,8Z,11Z,14Z)-eicosatetraenoate + ATP + CoA = (5Z,8Z,11Z,14Z)-eicosatetraenoyl-CoA + AMP + diphosphate. It carries out the reaction 15-hydroxy-(5Z,8Z,11Z,13E)-eicosatetraenoate + ATP + CoA = 15-hydroxy-(5Z,8Z,11Z,13E)-eicosatetraenoyl-CoA + AMP + diphosphate. The catalysed reaction is 12-hydroxy-(5Z,8Z,10E,14Z)-eicosatetraenoate + ATP + CoA = 12-hydroxy-(5Z,8Z,10E,14Z)-eicosatetraenoyl-CoA + AMP + diphosphate. The enzyme catalyses 5-hydroxy-(6E,8Z,11Z,14Z)-eicosatetraenoate + ATP + CoA = 5-hydroxy-(6E,8Z,11Z,14Z)-eicosatetraenoyl-CoA + AMP + diphosphate. It catalyses the reaction 5,6-epoxy-(8Z,11Z,14Z)-eicosatrienoate + ATP + CoA = 5,6-epoxy-(8Z,11Z,14Z)-eicosatrienoyl-CoA + AMP + diphosphate. It carries out the reaction 14,15-epoxy-(5Z,8Z,11Z)-eicosatrienoate + ATP + CoA = 14,15-epoxy-(5Z,8Z,11Z)-eicosatrienoyl-CoA + AMP + diphosphate. The catalysed reaction is 11,12-epoxy-(5Z,8Z,14Z)-eicosatrienoate + ATP + CoA = 11,12-epoxy-(5Z,8Z,14Z)-eicosatrienoyl-CoA + AMP + diphosphate. The enzyme catalyses 8,9-epoxy-(5Z,11Z,14Z)-eicosatrienoate + ATP + CoA = 8,9-epoxy-(5Z,11Z,14Z)-eicosatrienoyl-CoA + AMP + diphosphate. It catalyses the reaction hexadecanoate + ATP + CoA = hexadecanoyl-CoA + AMP + diphosphate. It carries out the reaction (E)-hexadec-2-enoate + ATP + CoA = (2E)-hexadecenoyl-CoA + AMP + diphosphate. Both triacsin C and rosiglitazone inhibit arachidonoyl-CoA ligase activity. Functionally, catalyzes the conversion of long-chain fatty acids to their active form acyl-CoA for both synthesis of cellular lipids, and degradation via beta-oxidation. Preferentially activates arachidonate and eicosapentaenoate as substrates. Preferentially activates 8,9-EET &gt; 14,15-EET &gt; 5,6-EET &gt; 11,12-EET. Modulates glucose-stimulated insulin secretion by regulating the levels of unesterified EETs. Modulates prostaglandin E2 secretion. This is Long-chain-fatty-acid--CoA ligase 4 (Acsl4) from Mus musculus (Mouse).